We begin with the raw amino-acid sequence, 512 residues long: uncharacterized protein (512 aa).

12 helical membrane passes run 25–45, 55–75, 96–116, 123–143, 148–168, 183–203, 238–258, 263–283, 294–314, 329–349, 359–379, and 386–406; these read GFYT…VICA, LLYP…PLIL, LVVC…VFLA, VVTG…LPAV, LLLT…LVIV, LLWL…FVGP, MTTY…SLRA, GSLH…SMLW, GLLL…MVAE, FLLA…WISV, LICV…VALG, and ATIW…VASL. The tract at residues 428-512 is disordered; that stretch reads YRPATPNPIH…APLDAGQRIA (85 aa).

It is found in the cell membrane. This is an uncharacterized protein from Mycobacterium tuberculosis (strain CDC 1551 / Oshkosh).